The sequence spans 215 residues: UPF0502 protein YceH (215 aa).

Lysine 80 is modified (N6-acetyllysine).

This sequence belongs to the UPF0502 family.

The polypeptide is UPF0502 protein YceH (Escherichia coli (strain K12 / MC4100 / BW2952)).